A 113-amino-acid chain; its full sequence is MRKSYRVKKEAEFQTVFTQGQSCANRQFVVYMLEKPDQKHFRVGISVGKKIGNAVARNWVKRRIRQSLTELKPQLKQDCDFLVIARPTVAYMSMAEVKEHLKHVLKLAKVLGE.

Belongs to the RnpA family. In terms of assembly, consists of a catalytic RNA component (M1 or rnpB) and a protein subunit.

It carries out the reaction Endonucleolytic cleavage of RNA, removing 5'-extranucleotides from tRNA precursor.. RNaseP catalyzes the removal of the 5'-leader sequence from pre-tRNA to produce the mature 5'-terminus. It can also cleave other RNA substrates such as 4.5S RNA. The protein component plays an auxiliary but essential role in vivo by binding to the 5'-leader sequence and broadening the substrate specificity of the ribozyme. The sequence is that of Ribonuclease P protein component from Ligilactobacillus salivarius (strain UCC118) (Lactobacillus salivarius).